A 197-amino-acid polypeptide reads, in one-letter code: Recombination protein RecR (197 aa).

A C4-type zinc finger spans residues 55–70; that stretch reads CVQCRDFTESEICTIC. The Toprim domain occupies 78 to 173; it reads QQLCVVESPA…RPSRLAQGMP (96 aa).

It belongs to the RecR family.

May play a role in DNA repair. It seems to be involved in an RecBC-independent recombinational process of DNA repair. It may act with RecF and RecO. This Xanthomonas oryzae pv. oryzae (strain MAFF 311018) protein is Recombination protein RecR.